We begin with the raw amino-acid sequence, 100 residues long: Replication restart protein PriB (100 aa).

Residues 1–99 form the SSB domain; sequence MGFNNLVSLA…LRIQNIQEYK (99 aa).

Belongs to the PriB family. In terms of assembly, homodimer. Interacts with PriA and DnaT. Component of the replication restart primosome. Primosome assembly occurs via a 'hand-off' mechanism. PriA binds to replication forks, subsequently PriB then DnaT bind; DnaT then displaces ssDNA to generate the helicase loading substrate.

Its function is as follows. Involved in the restart of stalled replication forks, which reloads the replicative helicase on sites other than the origin of replication; the PriA-PriB pathway is the major replication restart pathway. During primosome assembly it facilitates complex formation between PriA and DnaT on DNA; stabilizes PriA on DNA. Stimulates the DNA unwinding activity of PriA helicase. The sequence is that of Replication restart protein PriB from Neisseria meningitidis serogroup A / serotype 4A (strain DSM 15465 / Z2491).